We begin with the raw amino-acid sequence, 1499 residues long: Rho GTPase-activating protein 35 (1499 aa).

Residues 1–266 form a has GTPase activity, required for proper localization region; that stretch reads MMMARKQDVR…IPYFEALKQQ (266 aa). Residues lysine 28, 33-37, leucine 52, serine 56, 95-97, 201-203, and 229-231 each bind GTP; these read IGKSC, EQT, KCD, and SAR. FF domains follow at residues 270–327, 368–422, 429–483, and 485–550; these read IATA…HIHR, KLLE…HLEK, RAEM…HQKQ, and IDRA…HIHF. The residue at position 308 (tyrosine 308) is a Phosphotyrosine. A Phosphoserine modification is found at serine 589. The pG1 pseudoGTPase domain occupies 592–767; the sequence is DPNIDRINLV…LLDSKRNLNL (176 aa). Serine 770 and serine 773 each carry phosphoserine. In terms of domain architecture, pG2 pseudoGTPase spans 783–947; sequence RIVMCLMCGD…FKDVVEKKNI (165 aa). Serine 970, serine 975, serine 985, and serine 1072 each carry phosphoserine. Tyrosine 1087 is modified (phosphotyrosine). Tyrosine 1105 is modified (phosphotyrosine; by ABL2 and PTK6). Residues 1124–1141 are compositionally biased toward polar residues; sequence KAQSNGSGNGSDSEMDTS. The disordered stretch occupies residues 1124-1148; the sequence is KAQSNGSGNGSDSEMDTSSLERGRK. 6 positions are modified to phosphoserine: serine 1134, serine 1142, serine 1150, serine 1176, serine 1179, and serine 1221. The interval 1177-1207 is disordered; the sequence is VGSDDELGPIRKKEEDQASQGYKGDNAVIPY. The segment at 1213-1236 is required for phospholipid binding and regulation of the substrate preference; sequence PRRRNILRSLRRNTKKPKPKPRPS. Threonine 1226 bears the Phosphothreonine mark. Position 1236 is a phosphoserine (serine 1236). The region spanning 1249 to 1436 is the Rho-GAP domain; it reads VPLTTVVTPE…LFIQQCPFFF (188 aa). The tract at residues 1446-1499 is disordered; that stretch reads GAAPGSPSAMAPTVPFLTSTPATSQPSPPQSPPPTPQSPMQPLLSSQLQAEHTL. Positions 1448–1470 are enriched in low complexity; it reads APGSPSAMAPTVPFLTSTPATSQ. Over residues 1471-1484 the composition is skewed to pro residues; it reads PSPPQSPPPTPQSP. Phosphoserine occurs at positions 1472 and 1476. Threonine 1480 carries the phosphothreonine modification. Serine 1483 bears the Phosphoserine mark. Residues 1485–1499 show a composition bias toward low complexity; it reads MQPLLSSQLQAEHTL.

As to quaternary structure, interacts with RASA1. Interacts with the general transcription factor GTF2I, the interaction sequesters GTF2I in the cytoplasm. Phosphorylation of Tyr-1105 by PTK6 promotes the association with RASA1, inactivating RHOA while activating RAS. Phosphorylation at Tyr-308 by PDGFRA inhibits binding to GTF2I. Phosphorylated by PRKCA at Ser-1221 and Thr-1226, induces relocalization from the cytoplasm to regions of plasma membrane ruffling and prevents the binding and substrate specificity regulation by phospholipids. In brain, phosphorylated by FYN and SRC. During focal adhesion formation, phosphorylated by MAPK1 and MAPK3 at the C-terminal region, probably at Ser-1451, Ser-1476, Thr-1480 and Ser-1483. Phosphorylation by MAPK1 and MAPK3 inhibits GAP function and localizes ARGHAP35 away from newly forming focal adhesions and stress fibers in cells spreading on fibronectin. Phosphorylation at Ser-1476 and Thr-1480 by GSK3B requires priming by MAPK and inhibits RhoGAP activity and modulates polarized cell migration. As to expression, ubiquitously expressed.

The protein localises to the cytoplasm. It is found in the cytoskeleton. The protein resides in the cilium basal body. It localises to the nucleus. Its subcellular location is the cell membrane. Its function is as follows. Rho GTPase-activating protein (GAP). Binds several acidic phospholipids which inhibits the Rho GAP activity to promote the Rac GAP activity. This binding is inhibited by phosphorylation by PRKCA. Involved in cell differentiation as well as cell adhesion and migration, plays an important role in retinal tissue morphogenesis, neural tube fusion, midline fusion of the cerebral hemispheres and mammary gland branching morphogenesis. Transduces signals from p21-ras to the nucleus, acting via the ras GTPase-activating protein (GAP). Transduces SRC-dependent signals from cell-surface adhesion molecules, such as laminin, to promote neurite outgrowth. Regulates axon outgrowth, guidance and fasciculation. Modulates Rho GTPase-dependent F-actin polymerization, organization and assembly, is involved in polarized cell migration and in the positive regulation of ciliogenesis and cilia elongation. During mammary gland development, is required in both the epithelial and stromal compartments for ductal outgrowth. Represses transcription of the glucocorticoid receptor by binding to the cis-acting regulatory sequence 5'-GAGAAAAGAAACTGGAGAAACTC-3'; this function is however unclear and would need additional experimental evidences. This is Rho GTPase-activating protein 35 from Rattus norvegicus (Rat).